The chain runs to 169 residues: Mu-like prophage FluMu host-nuclease inhibitor protein gam (169 aa).

To phage Mu protein gam.

In terms of biological role, protects linear double-stranded DNA of Mu genome from exonuclease degradation. The polypeptide is Mu-like prophage FluMu host-nuclease inhibitor protein gam (Haemophilus influenzae (strain ATCC 51907 / DSM 11121 / KW20 / Rd)).